A 51-amino-acid chain; its full sequence is Protein HokD (51 aa).

The helical transmembrane segment at 5–25 (KAMLIALIVICLTVIVTALVT) threads the bilayer.

Belongs to the Hok/Gef family.

The protein localises to the cell inner membrane. Its function is as follows. Toxic component of a type I toxin-antitoxin (TA) system. When overexpressed kills cells within minutes; causes collapse of the transmembrane potential and arrest of respiration. Its toxic effect is probably neutralized by an antisense antitoxin Sok RNA. The polypeptide is Protein HokD (hokD) (Escherichia coli O157:H7).